We begin with the raw amino-acid sequence, 217 residues long: ATP-dependent Clp protease proteolytic subunit (217 aa).

Ser-119 functions as the Nucleophile in the catalytic mechanism. The active site involves His-144.

It belongs to the peptidase S14 family. In terms of assembly, fourteen ClpP subunits assemble into 2 heptameric rings which stack back to back to give a disk-like structure with a central cavity, resembling the structure of eukaryotic proteasomes.

The protein resides in the cytoplasm. The enzyme catalyses Hydrolysis of proteins to small peptides in the presence of ATP and magnesium. alpha-casein is the usual test substrate. In the absence of ATP, only oligopeptides shorter than five residues are hydrolyzed (such as succinyl-Leu-Tyr-|-NHMec, and Leu-Tyr-Leu-|-Tyr-Trp, in which cleavage of the -Tyr-|-Leu- and -Tyr-|-Trp bonds also occurs).. Functionally, cleaves peptides in various proteins in a process that requires ATP hydrolysis. Has a chymotrypsin-like activity. Plays a major role in the degradation of misfolded proteins. This chain is ATP-dependent Clp protease proteolytic subunit, found in Bordetella petrii (strain ATCC BAA-461 / DSM 12804 / CCUG 43448).